The chain runs to 721 residues: 1,4-alpha-glucan branching enzyme GlgB (721 aa).

Aspartate 400 acts as the Nucleophile in catalysis. Glutamate 453 functions as the Proton donor in the catalytic mechanism.

It belongs to the glycosyl hydrolase 13 family. GlgB subfamily. As to quaternary structure, monomer.

It carries out the reaction Transfers a segment of a (1-&gt;4)-alpha-D-glucan chain to a primary hydroxy group in a similar glucan chain.. It functions in the pathway glycan biosynthesis; glycogen biosynthesis. Functionally, catalyzes the formation of the alpha-1,6-glucosidic linkages in glycogen by scission of a 1,4-alpha-linked oligosaccharide from growing alpha-1,4-glucan chains and the subsequent attachment of the oligosaccharide to the alpha-1,6 position. This Chlamydia abortus (strain DSM 27085 / S26/3) (Chlamydophila abortus) protein is 1,4-alpha-glucan branching enzyme GlgB.